A 214-amino-acid chain; its full sequence is Pyridoxine/pyridoxamine 5'-phosphate oxidase (214 aa).

Residues 8–11 (RINY) and Lys-66 each bind substrate. Residues 61–66 (RIVLIK), 76–77 (FT), Arg-82, Lys-83, and Gln-105 contribute to the FMN site. Substrate-binding residues include Tyr-123, Arg-127, and Ser-131. Residues 140 to 141 (QS) and Trp-184 contribute to the FMN site. 190-192 (RLH) is a substrate binding site. Arg-194 contributes to the FMN binding site.

The protein belongs to the pyridoxamine 5'-phosphate oxidase family. As to quaternary structure, homodimer. Requires FMN as cofactor.

It carries out the reaction pyridoxamine 5'-phosphate + O2 + H2O = pyridoxal 5'-phosphate + H2O2 + NH4(+). The enzyme catalyses pyridoxine 5'-phosphate + O2 = pyridoxal 5'-phosphate + H2O2. It participates in cofactor metabolism; pyridoxal 5'-phosphate salvage; pyridoxal 5'-phosphate from pyridoxamine 5'-phosphate: step 1/1. It functions in the pathway cofactor metabolism; pyridoxal 5'-phosphate salvage; pyridoxal 5'-phosphate from pyridoxine 5'-phosphate: step 1/1. In terms of biological role, catalyzes the oxidation of either pyridoxine 5'-phosphate (PNP) or pyridoxamine 5'-phosphate (PMP) into pyridoxal 5'-phosphate (PLP). This chain is Pyridoxine/pyridoxamine 5'-phosphate oxidase, found in Burkholderia cenocepacia (strain HI2424).